Here is a 580-residue protein sequence, read N- to C-terminus: RuBisCO large subunit-binding protein subunit alpha, chloroplastic (580 aa).

Positions 1 to 17 (MAQSQLAKGSRQTTGRP) are enriched in polar residues. The tract at residues 1 to 24 (MAQSQLAKGSRQTTGRPFQNKPAR) is disordered.

The protein belongs to the chaperonin (HSP60) family. In terms of assembly, oligomer of probably six alpha and six beta subunits.

The protein localises to the plastid. It is found in the chloroplast. This protein binds RuBisCO small and large subunits and is implicated in the assembly of the enzyme oligomer. The protein is RuBisCO large subunit-binding protein subunit alpha, chloroplastic of Chlamydomonas reinhardtii (Chlamydomonas smithii).